A 175-amino-acid chain; its full sequence is 3-hydroxyanthranilate 3,4-dioxygenase (175 aa).

R45 provides a ligand contact to O2. Fe cation-binding residues include H49, E55, and H93. E55 is a substrate binding site. R97 and E107 together coordinate substrate. A divalent metal cation is bound by residues C122, C125, C159, and C162.

This sequence belongs to the 3-HAO family. The cofactor is Fe(2+).

The protein resides in the cytoplasm. It carries out the reaction 3-hydroxyanthranilate + O2 = (2Z,4Z)-2-amino-3-carboxymuconate 6-semialdehyde. It participates in cofactor biosynthesis; NAD(+) biosynthesis; quinolinate from L-kynurenine: step 3/3. In terms of biological role, catalyzes the oxidative ring opening of 3-hydroxyanthranilate to 2-amino-3-carboxymuconate semialdehyde, which spontaneously cyclizes to quinolinate. The sequence is that of 3-hydroxyanthranilate 3,4-dioxygenase from Lodderomyces elongisporus (strain ATCC 11503 / CBS 2605 / JCM 1781 / NBRC 1676 / NRRL YB-4239) (Yeast).